The primary structure comprises 296 residues: MSWIERILGRTASSSSSSKSKVPEGVWTKCTNCEQVLYSEELKRNMQVCPKCDHHMRFDARTRLLSLLDQGSAEEIAANLEPQDILKFKDLKKYKDRLTAAQKQTGEKDAFITMFGTLYEMPIVVASFNFEFMGGSMGAVVGAKFVRAAEKALAENIPFICFSASGGARMQEALFSLMQMAKTSAILAKMREKGGPFISVLTDPTLGGVSASLAMLGDINIAEPKSLIGFAGPRVIEQTVREKLPEGFQRAEFLLEHGAIDMIVQRKDMRDTLARLCAKMTNQPSPFKVGELIIEE.

The 270-residue stretch at 26–295 (VWTKCTNCEQ…PFKVGELIIE (270 aa)) folds into the CoA carboxyltransferase N-terminal domain. The Zn(2+) site is built by C30, C33, C49, and C52. The C4-type zinc finger occupies 30 to 52 (CTNCEQVLYSEELKRNMQVCPKC).

Belongs to the AccD/PCCB family. Acetyl-CoA carboxylase is a heterohexamer composed of biotin carboxyl carrier protein (AccB), biotin carboxylase (AccC) and two subunits each of ACCase subunit alpha (AccA) and ACCase subunit beta (AccD). Zn(2+) is required as a cofactor.

It localises to the cytoplasm. It catalyses the reaction N(6)-carboxybiotinyl-L-lysyl-[protein] + acetyl-CoA = N(6)-biotinyl-L-lysyl-[protein] + malonyl-CoA. It participates in lipid metabolism; malonyl-CoA biosynthesis; malonyl-CoA from acetyl-CoA: step 1/1. In terms of biological role, component of the acetyl coenzyme A carboxylase (ACC) complex. Biotin carboxylase (BC) catalyzes the carboxylation of biotin on its carrier protein (BCCP) and then the CO(2) group is transferred by the transcarboxylase to acetyl-CoA to form malonyl-CoA. The sequence is that of Acetyl-coenzyme A carboxylase carboxyl transferase subunit beta from Haemophilus ducreyi (strain 35000HP / ATCC 700724).